Reading from the N-terminus, the 499-residue chain is U4/U6 small nuclear ribonucleoprotein Prp31 (499 aa).

Positions 1 to 37 are disordered; the sequence is MSLADELLADLEEAAEEEEGGSYGEEEEEPAIEDVQE. The segment covering 7–37 has biased composition (acidic residues); the sequence is LLADLEEAAEEEEGGSYGEEEEEPAIEDVQE. Coiled-coil stretches lie at residues 85–120 and 181–215; these read EAAPEYRVIVDANNLTVEIENELNIIHKFIRDKYSK and EEELERLEEACDMALELNASKHRIYEYVESRMSFI. In terms of domain architecture, Nop spans 215–333; the sequence is IAPNLSIIIG…IERKFDKWQE (119 aa). The segment at 334-357 is disordered; it reads PPPVKQVKPLPAPLDGQRKKRGGR. A Nuclear localization signal (NLS) motif is present at residues 351 to 364; sequence RKKRGGRRYRKMKE. 3 positions are modified to phosphoserine: Ser379, Ser395, and Ser432. Position 438 is an N6-acetyllysine (Lys438). Ser439 bears the Phosphoserine mark. A Phosphothreonine modification is found at Thr440. The residue at position 450 (Ser450) is a Phosphoserine. Thr455 carries the phosphothreonine modification. Glycyl lysine isopeptide (Lys-Gly) (interchain with G-Cter in SUMO2) cross-links involve residues Lys471 and Lys478.

This sequence belongs to the PRP31 family. In terms of assembly, identified in the spliceosome B complex. Component of the U4/U6-U5 tri-snRNP complex composed of the U4, U6 and U5 snRNAs and at least PRPF3, PRPF4, PRPF6, PRPF8, PRPF31, SNRNP200, TXNL4A, SNRNP40, DDX23, CD2BP2, PPIH, SNU13, EFTUD2, SART1 and USP39. Interacts with a complex formed by SNU13 and U4 snRNA, but not with SNU13 or U4 snRNA alone. The complex formed by SNU13 and PRPF31 also binds U4atac snRNA, a characteristic component of specific, less abundant spliceosomal complexes. Interacts with PRPF6/U5 snRNP-associated 102 kDa protein. Component of some MLL1/MLL complex, at least composed of the core components KMT2A/MLL1, ASH2L, HCFC1/HCF1, WDR5 and RBBP5, as well as the facultative components BACC1, CHD8, E2F6, HSP70, INO80C, KANSL1, LAS1L, MAX, MCRS1, MGA, KAT8/MOF, PELP1, PHF20, PRP31, RING2, RUVB1/TIP49A, RUVB2/TIP49B, SENP3, TAF1, TAF4, TAF6, TAF7, TAF9 and TEX10. Interacts (via its NLS) with CTNNBL1. Interacts with USH1G. In terms of processing, phosphorylated by PRP4K during spliceosome assembly. Ubiquitously expressed.

It localises to the nucleus. The protein resides in the nucleus speckle. It is found in the cajal body. In terms of biological role, involved in pre-mRNA splicing as component of the spliceosome. Required for the assembly of the U4/U5/U6 tri-snRNP complex, one of the building blocks of the spliceosome. This chain is U4/U6 small nuclear ribonucleoprotein Prp31, found in Homo sapiens (Human).